Consider the following 188-residue polypeptide: dCTP deaminase (188 aa).

Residues 111–116, 135–137, Gln156, Tyr170, and Gln180 each bind dCTP; these read KSTYAR and TLE. Glu137 functions as the Proton donor/acceptor in the catalytic mechanism.

Belongs to the dCTP deaminase family. In terms of assembly, homotrimer.

It carries out the reaction dCTP + H2O + H(+) = dUTP + NH4(+). The protein operates within pyrimidine metabolism; dUMP biosynthesis; dUMP from dCTP (dUTP route): step 1/2. Catalyzes the deamination of dCTP to dUTP. In Acidovorax sp. (strain JS42), this protein is dCTP deaminase.